The primary structure comprises 316 residues: Small ribosomal subunit protein RACK1 (316 aa).

WD repeat units lie at residues 13–44 (GHNG…IIWN), 61–91 (GHSH…RLWE), 103–133 (GHTN…KLWN), 146–178 (GHTE…KVWE), 190–220 (GHTG…MLWD), 231–260 (NAND…IIFD), and 281–311 (SREP…RAWG).

This sequence belongs to the WD repeat G protein beta family. Ribosomal protein RACK1 subfamily. Component of the small ribosomal subunit (SSU). Mature N.crassa ribosomes consist of a small (40S) and a large (60S) subunit. The 40S small subunit contains 1 molecule of ribosomal RNA (18S rRNA) and at least 32 different proteins. The large 60S subunit contains 3 rRNA molecules (26S, 5.8S and 5S rRNA) and at least 42 different proteins.

It is found in the cytoplasm. Functionally, component of the ribosome, a large ribonucleoprotein complex responsible for the synthesis of proteins in the cell. The small ribosomal subunit (SSU) binds messenger RNAs (mRNAs) and translates the encoded message by selecting cognate aminoacyl-transfer RNA (tRNA) molecules. The large subunit (LSU) contains the ribosomal catalytic site termed the peptidyl transferase center (PTC), which catalyzes the formation of peptide bonds, thereby polymerizing the amino acids delivered by tRNAs into a polypeptide chain. The nascent polypeptides leave the ribosome through a tunnel in the LSU and interact with protein factors that function in enzymatic processing, targeting, and the membrane insertion of nascent chains at the exit of the ribosomal tunnel. Required to activate general amino acid control under conditions of amino acid limitation in the vegetative growth phase, and for formation of protoperithecia in preparation for the sexual phase of the life cycle of N.crassa. In Neurospora crassa (strain ATCC 24698 / 74-OR23-1A / CBS 708.71 / DSM 1257 / FGSC 987), this protein is Small ribosomal subunit protein RACK1 (cpc-2).